Reading from the N-terminus, the 309-residue chain is Homoserine O-succinyltransferase (309 aa).

The Acyl-thioester intermediate role is filled by Cys142. Positions 163 and 192 each coordinate substrate. The active-site Proton acceptor is His235. Residue Glu237 is part of the active site. Arg249 serves as a coordination point for substrate.

The protein belongs to the MetA family. Homodimer.

Its subcellular location is the cytoplasm. It catalyses the reaction L-homoserine + succinyl-CoA = O-succinyl-L-homoserine + CoA. It functions in the pathway amino-acid biosynthesis; L-methionine biosynthesis via de novo pathway; O-succinyl-L-homoserine from L-homoserine: step 1/1. Functionally, transfers a succinyl group from succinyl-CoA to L-homoserine, forming succinyl-L-homoserine. This chain is Homoserine O-succinyltransferase, found in Escherichia coli O17:K52:H18 (strain UMN026 / ExPEC).